We begin with the raw amino-acid sequence, 354 residues long: Cysteine proteinase A (354 aa).

The first 24 residues, 1-24 (MARRNPLLFAIVVTILFVVCYGSA), serve as a signal peptide directing secretion. A propeptide spans 25 to 125 (LIAQTPPPVD…HKEDVHVDDS (101 aa)) (activation peptide). Disulfide bonds link cysteine 150-cysteine 191, cysteine 184-cysteine 229, and cysteine 282-cysteine 330. Cysteine 153 is an active-site residue. Asparagine 208 is a glycosylation site (N-linked (GlcNAc...) asparagine). Catalysis depends on residues histidine 289 and asparagine 309.

This sequence belongs to the peptidase C1 family.

In Leishmania mexicana, this protein is Cysteine proteinase A (LMCPA).